Here is a 72-residue protein sequence, read N- to C-terminus: ATP-dependent Clp protease ATP-binding subunit ClpA homolog (72 aa).

This sequence belongs to the ClpA/ClpB family.

It is found in the plastid. The protein localises to the chloroplast. Functionally, may interact with a ClpP-like protease involved in degradation of denatured proteins in the chloroplast. This chain is ATP-dependent Clp protease ATP-binding subunit ClpA homolog, found in Populus euphratica (Euphrates poplar).